The chain runs to 245 residues: tRNA1(Val) (adenine(37)-N6)-methyltransferase (245 aa).

Belongs to the methyltransferase superfamily. tRNA (adenine-N(6)-)-methyltransferase family.

It localises to the cytoplasm. The enzyme catalyses adenosine(37) in tRNA1(Val) + S-adenosyl-L-methionine = N(6)-methyladenosine(37) in tRNA1(Val) + S-adenosyl-L-homocysteine + H(+). Its function is as follows. Specifically methylates the adenine in position 37 of tRNA(1)(Val) (anticodon cmo5UAC). The polypeptide is tRNA1(Val) (adenine(37)-N6)-methyltransferase (Escherichia fergusonii (strain ATCC 35469 / DSM 13698 / CCUG 18766 / IAM 14443 / JCM 21226 / LMG 7866 / NBRC 102419 / NCTC 12128 / CDC 0568-73)).